A 138-amino-acid polypeptide reads, in one-letter code: Spermidine export protein MdtJ (138 aa).

The next 4 membrane-spanning stretches (helical) occupy residues 1–21, 30–50, 54–74, and 81–101; these read MIYWLFLAMAIITEVIGTLSM, VVGMAVMYIMIATSYILLAMA, VALGVAYALWEGVGILFITVF, and ESLSLMKVGGLALLITGIMLI.

It belongs to the drug/metabolite transporter (DMT) superfamily. Small multidrug resistance (SMR) (TC 2.A.7.1) family. MdtJ subfamily. In terms of assembly, forms a complex with MdtI.

It localises to the cell inner membrane. In terms of biological role, catalyzes the excretion of spermidine. This is Spermidine export protein MdtJ from Photorhabdus laumondii subsp. laumondii (strain DSM 15139 / CIP 105565 / TT01) (Photorhabdus luminescens subsp. laumondii).